Reading from the N-terminus, the 447-residue chain is tRNA-2-methylthio-N(6)-dimethylallyladenosine synthase (447 aa).

An MTTase N-terminal domain is found at 10 to 128 (KLFCISTYGC…FPEYLHRVLQ (119 aa)). Positions 19, 55, 89, 165, 169, and 172 each coordinate [4Fe-4S] cluster. Residues 151–382 (RKSDVKAFVT…EAINKKVVIK (232 aa)) enclose the Radical SAM core domain. A TRAM domain is found at 384–447 (KEYEGKVVEV…PFSLIGEIVE (64 aa)).

It belongs to the methylthiotransferase family. MiaB subfamily. In terms of assembly, monomer. Requires [4Fe-4S] cluster as cofactor.

The protein localises to the cytoplasm. The catalysed reaction is N(6)-dimethylallyladenosine(37) in tRNA + (sulfur carrier)-SH + AH2 + 2 S-adenosyl-L-methionine = 2-methylsulfanyl-N(6)-dimethylallyladenosine(37) in tRNA + (sulfur carrier)-H + 5'-deoxyadenosine + L-methionine + A + S-adenosyl-L-homocysteine + 2 H(+). Functionally, catalyzes the methylthiolation of N6-(dimethylallyl)adenosine (i(6)A), leading to the formation of 2-methylthio-N6-(dimethylallyl)adenosine (ms(2)i(6)A) at position 37 in tRNAs that read codons beginning with uridine. The protein is tRNA-2-methylthio-N(6)-dimethylallyladenosine synthase of Clostridium perfringens (strain ATCC 13124 / DSM 756 / JCM 1290 / NCIMB 6125 / NCTC 8237 / Type A).